The sequence spans 73 residues: Small, acid-soluble spore protein C2 (73 aa).

It belongs to the alpha/beta-type SASP family.

Its function is as follows. SASP are bound to spore DNA. They are double-stranded DNA-binding proteins that cause DNA to change to an a-like conformation. They protect the DNA backbone from chemical and enzymatic cleavage and are thus involved in dormant spore's high resistance to UV light. The chain is Small, acid-soluble spore protein C2 (SASP-C2) from Priestia megaterium (Bacillus megaterium).